A 208-amino-acid chain; its full sequence is Golgi apparatus membrane protein TVP23 homolog B (208 aa).

M1 bears the N-acetylmethionine mark. Over residues 1-21 (MLQQDSNDDTEDVSLFDAEEE) the composition is skewed to acidic residues. The segment at 1-27 (MLQQDSNDDTEDVSLFDAEEETTNRPK) is disordered. 4 helical membrane passes run 34-53 (PVAS…VYLL), 54-72 (CELF…ILLL), 126-146 (IFWL…FSAL), and 152-172 (KWLA…YGYI).

This sequence belongs to the TVP23 family.

It is found in the membrane. The chain is Golgi apparatus membrane protein TVP23 homolog B (TVP23B) from Bos taurus (Bovine).